Here is a 235-residue protein sequence, read N- to C-terminus: 15,16-dihydrobiliverdin:ferredoxin oxidoreductase (235 aa).

It belongs to the HY2 family.

It carries out the reaction 15,16-dihydrobiliverdin + oxidized 2[4Fe-4S]-[ferredoxin] = biliverdin IXalpha + reduced 2[4Fe-4S]-[ferredoxin] + 2 H(+). In terms of biological role, catalyzes the two-electron reduction of biliverdin IX-alpha at the C15 methine bridge. The sequence is that of 15,16-dihydrobiliverdin:ferredoxin oxidoreductase from Synechococcus sp. (strain CC9605).